A 532-amino-acid polypeptide reads, in one-letter code: RNA-directed RNA polymerase beta chain (532 aa).

The RdRp catalytic domain occupies 245 to 375; that stretch reads ELARLGSIDG…PNEEKTFTTG (131 aa).

Part of the viral RNA-dependent RNA polymerase complex, the other subunits are probably the host ribosomal protein S1, EF-Tu and EF-Ts.

The enzyme catalyses RNA(n) + a ribonucleoside 5'-triphosphate = RNA(n+1) + diphosphate. Functionally, this is the catalytic subunit of the viral RNA-dependent RNA polymerase complex. This complex is involved in viral RNA replication that produces (+)-stranded genomes via a complementary, (-)-stranded intermediate. The polypeptide is RNA-directed RNA polymerase beta chain (Escherichia coli (Bacteriophage GA)).